We begin with the raw amino-acid sequence, 437 residues long: Glutamyl-tRNA reductase (437 aa).

Residues 46-49 (TCNR), S97, 102-104 (EEQ), and Q108 each bind substrate. C47 serves as the catalytic Nucleophile. 177–182 (GAGEMG) provides a ligand contact to NADP(+). A disordered region spans residues 410–437 (NGRVSEGKDAKVEEGKPEVDVQRSKAES). The span at 414–437 (SEGKDAKVEEGKPEVDVQRSKAES) shows a compositional bias: basic and acidic residues.

Belongs to the glutamyl-tRNA reductase family. Homodimer.

It carries out the reaction (S)-4-amino-5-oxopentanoate + tRNA(Glu) + NADP(+) = L-glutamyl-tRNA(Glu) + NADPH + H(+). It participates in porphyrin-containing compound metabolism; protoporphyrin-IX biosynthesis; 5-aminolevulinate from L-glutamyl-tRNA(Glu): step 1/2. Catalyzes the NADPH-dependent reduction of glutamyl-tRNA(Glu) to glutamate 1-semialdehyde (GSA). The polypeptide is Glutamyl-tRNA reductase (Archaeoglobus fulgidus (strain ATCC 49558 / DSM 4304 / JCM 9628 / NBRC 100126 / VC-16)).